Here is a 197-residue protein sequence, read N- to C-terminus: Beta-crystallin A2 (197 aa).

The interval 1-11 (MSSAPAPGSAP) is N-terminal arm. 2 Beta/gamma crystallin 'Greek key' domains span residues 12 to 52 (VCLT…KVEN) and 53 to 99 (GAWV…RPVL). The interval 100–105 (CANHSD) is connecting peptide. 2 Beta/gamma crystallin 'Greek key' domains span residues 106–147 (SRVT…KVSS) and 148–196 (GAWV…RRVQ).

The protein belongs to the beta/gamma-crystallin family. In terms of assembly, homo/heterodimer, or complexes of higher-order. The structure of beta-crystallin oligomers seems to be stabilized through interactions between the N-terminal arms.

In terms of biological role, crystallins are the dominant structural components of the vertebrate eye lens. The polypeptide is Beta-crystallin A2 (Cryba2) (Mus musculus (Mouse)).